The primary structure comprises 250 residues: Triosephosphate isomerase (250 aa).

9–11 is a binding site for substrate; sequence NWK. The active-site Electrophile is histidine 95. Residue glutamate 167 is the Proton acceptor of the active site. Substrate is bound by residues glycine 173, serine 212, and 233–234; that span reads GG.

The protein belongs to the triosephosphate isomerase family. Homodimer.

It localises to the cytoplasm. The catalysed reaction is D-glyceraldehyde 3-phosphate = dihydroxyacetone phosphate. Its pathway is carbohydrate biosynthesis; gluconeogenesis. It functions in the pathway carbohydrate degradation; glycolysis; D-glyceraldehyde 3-phosphate from glycerone phosphate: step 1/1. Its function is as follows. Involved in the gluconeogenesis. Catalyzes stereospecifically the conversion of dihydroxyacetone phosphate (DHAP) to D-glyceraldehyde-3-phosphate (G3P). In Psychromonas ingrahamii (strain DSM 17664 / CCUG 51855 / 37), this protein is Triosephosphate isomerase.